We begin with the raw amino-acid sequence, 329 residues long: MELHILEHRVRVLSVARPGLWLYTHPLIKLLFLPRRSRCKFFSLTETPEDYTLMVDEEGFKELPPSEFLQVAEATWLVLNVSSHSGAAVQAAGVTKIARSVIAPLAEHHVSVLMLSTYQTDFILVREQDLSVVIHTLAQEFDIYREVGGEPVPVTRDDFSNGFPRTQHGPSPTVHPIQSPQNRFCVLTLDPETLPAIATTLIDVLFYSHRTPKEAASSSPEPSSITFFAFSLIEGYISIVMDAETQKKFPSDLLLTSSSGELWRMVRIGGQPLGFDECGIVAQIAGPLAAADISAYYISTFNFDHALVPEDGIGSVIEVLQRRQEGLAS.

Phosphoserine is present on serine 14. 2 consecutive ACT domains span residues 72 to 138 (AEAT…HTLA) and 260 to 321 (GELW…EVLQ). L-arginine-binding positions include 111-112 (SV), glycine 274, 280-281 (IV), and 300-304 (TFNFD).

Belongs to the GATS family. Forms homodimers and heterodimers with CASTOR2. Interacts with the GATOR2 complex which is composed of MIOS, SEC13, SEH1L, WDR24 and WDR59; the interaction is negatively regulated by arginine. Interacts with TM4SF5; the interaction is positively regulated by leucine and is negatively regulated by arginine. In terms of processing, phosphorylation at Ser-14 by AKT1, promoting the interaction between CASTOR1 and RNF167. Ubiquitinated by RNF167 via 'Lys-29'-polyubiquitination, leading to its degradation, releasing the GATOR2 complex. Ubiquitination by RNF167 is promoted by phosphorylation at Ser-14 by AKT1.

The protein localises to the cytoplasm. It localises to the cytosol. Functionally, functions as an intracellular arginine sensor within the amino acid-sensing branch of the TORC1 signaling pathway. As a homodimer or a heterodimer with CASTOR2, binds and inhibits the GATOR subcomplex GATOR2 and thereby mTORC1. Binding of arginine to CASTOR1 allosterically disrupts the interaction of CASTOR1-containing dimers with GATOR2 which can in turn activate mTORC1 and the TORC1 signaling pathway. In Pongo abelii (Sumatran orangutan), this protein is Cytosolic arginine sensor for mTORC1 subunit 1.